Reading from the N-terminus, the 1382-residue chain is Hepatocyte growth factor receptor (1382 aa).

The N-terminal stretch at 1 to 24 (MKASAVLAPGILVILFTLVQKSNC) is a signal peptide. Residues 25–933 (ECKEALVKSK…VIVQPDQNIT (909 aa)) lie on the Extracellular side of the membrane. The Sema domain occupies 27–516 (KEALVKSKMN…TGKKITKIPL (490 aa)). N-linked (GlcNAc...) asparagine glycosylation is present at N45. 4 cysteine pairs are disulfide-bonded: C95–C101, C98–C160, C133–C141, and C173–C176. An N-linked (GlcNAc...) asparagine glycan is attached at N106. N-linked (GlcNAc...) asparagine glycosylation is found at N203 and N359. Cystine bridges form between C299/C364 and C386/C398. N400 and N406 each carry an N-linked (GlcNAc...) asparagine glycan. 4 cysteine pairs are disulfide-bonded: C521/C539, C527/C562, C530/C546, and C542/C552. IPT/TIG domains follow at residues 564–656 (PTIY…FSYV), 658–740 (PIIT…FSYQ), and 743–837 (PIIY…LIYV). A glycan (O-linked (Man) threonine) is linked at T583. N-linked (GlcNAc...) asparagine glycosylation is found at N608 and N636. Residues T677 and T762 are each glycosylated (O-linked (Man) threonine). N-linked (GlcNAc...) asparagine glycans are attached at residues N786, N880, and N931. The helical transmembrane segment at 934–956 (EFIVGILSISGILLTLLGLLLWW) threads the bilayer. The Cytoplasmic segment spans residues 957 to 1382 (KKKKQIKDLG…QDNFDSEGNT (426 aa)). At S967 the chain carries Phosphoserine. The residue at position 978 (T978) is a Phosphothreonine. 3 positions are modified to phosphoserine: S991, S998, and S1001. Phosphotyrosine is present on Y1004. In terms of domain architecture, Protein kinase spans 1079–1346 (VHFNEVIGRG…RISAIFSTFI (268 aa)). ATP-binding positions include 1085–1093 (IGRGHFGCV) and K1111. D1205 functions as the Proton acceptor in the catalytic mechanism. The interval 1213 to 1382 (LDENFTVKVA…QDNFDSEGNT (170 aa)) is interaction with RANBP9. Y1231 carries the post-translational modification Phosphotyrosine. 2 positions are modified to phosphotyrosine; by autocatalysis: Y1235 and Y1236. T1290 is subject to Phosphothreonine. The interval 1321–1360 (WHPKAELRPSFSELVSRISAIFSTFIGEHYVHVNATYVNI) is interaction with MUC20. 2 positions are modified to phosphotyrosine; by autocatalysis: Y1350 and Y1357. The residue at position 1366 (Y1366) is a Phosphotyrosine.

Belongs to the protein kinase superfamily. Tyr protein kinase family. Heterodimer made of an alpha chain (50 kDa) and a beta chain (145 kDa) which are disulfide linked. Binds PLXNB1. Interacts when phosphorylated with downstream effectors including STAT3, PIK3R1, SRC, PCLG1, GRB2 and GAB1. Interacts with SPSB1, SPSB2 and SPSB4. Interacts with INPP5D/SHIP1. When phosphorylated at Tyr-1357, interacts with INPPL1/SHIP2. Interacts with RANBP9 and RANBP10, as well as SPSB1, SPSB2, SPSB3 and SPSB4. SPSB1 binding occurs in the presence and in the absence of HGF, however HGF treatment has a positive effect on this interaction. Interacts with MUC20; prevents interaction with GRB2 and suppresses hepatocyte growth factor-induced cell proliferation. Interacts with GRB10. Interacts with PTPN1 and PTPN2. Interacts with tensin TNS3. Interacts (when phosphorylated) with tensin TNS4 (via SH2 domain); the interaction increases MET protein stability by inhibiting MET endocytosis and subsequent lysosomal degradation. In terms of processing, autophosphorylated in response to ligand binding on Tyr-1235 and Tyr-1236 in the kinase domain leading to further phosphorylation of Tyr-1350 and Tyr-1357 in the C-terminal multifunctional docking site. Dephosphorylated by PTPRJ at Tyr-1350 and Tyr-1366. Dephosphorylated by PTPN1 and PTPN2. Ubiquitinated. Ubiquitination by CBL regulates the receptor stability and activity through proteasomal degradation. Post-translationally, O-mannosylation of IPT/TIG domains by TMEM260 is required for protein maturation. O-mannosylated residues are composed of single mannose glycans that are not elongated or modified.

It is found in the membrane. It carries out the reaction L-tyrosyl-[protein] + ATP = O-phospho-L-tyrosyl-[protein] + ADP + H(+). With respect to regulation, in its inactive state, the C-terminal tail interacts with the catalytic domain and inhibits the kinase activity. Upon ligand binding, the C-terminal tail is displaced and becomes phosphorylated, thus increasing the kinase activity. Receptor tyrosine kinase that transduces signals from the extracellular matrix into the cytoplasm by binding to hepatocyte growth factor/HGF ligand. Regulates many physiological processes including proliferation, scattering, morphogenesis and survival. Ligand binding at the cell surface induces autophosphorylation of MET on its intracellular domain that provides docking sites for downstream signaling molecules. Following activation by ligand, interacts with the PI3-kinase subunit PIK3R1, PLCG1, SRC, GRB2, STAT3 or the adapter GAB1. Recruitment of these downstream effectors by MET leads to the activation of several signaling cascades including the RAS-ERK, PI3 kinase-AKT, or PLCgamma-PKC. The RAS-ERK activation is associated with the morphogenetic effects while PI3K/AKT coordinates prosurvival effects. During embryonic development, MET signaling plays a role in gastrulation, development and migration of muscles and neuronal precursors, angiogenesis and kidney formation. In adults, participates in wound healing as well as organ regeneration and tissue remodeling. Also promotes differentiation and proliferation of hematopoietic cells. The polypeptide is Hepatocyte growth factor receptor (MET) (Atelerix albiventris (Middle-African hedgehog)).